We begin with the raw amino-acid sequence, 350 residues long: D-guloside 3-dehydrogenase (350 aa).

This sequence belongs to the zinc-containing alcohol dehydrogenase family. Zn(2+) is required as a cofactor.

It catalyses the reaction a D-guloside + NAD(+) = a 3-dehydro-D-guloside + NADH + H(+). In terms of biological role, catalyzes the NAD(+)-dependent oxidation of the hydroxyl group at C3 of D-gulosides leading to 3-dehydro-D-gulosides. Probably functions in a metabolic pathway that transforms D-gulosides to D-glucosides. Is also able to catalyze the reverse reactions, i.e. the NADH-dependent reduction of the oxo group at C3 of 3-dehydro-D-gulosides leading to D-gulosides. In vitro, can oxidize D-gulose and methyl beta-D-guloside, and reduce methyl alpha-3-dehydro-D-guloside and methyl beta-3-dehydro-D-guloside. However, the actual specific physiological substrates for this metabolic pathway are unknown. The protein is D-guloside 3-dehydrogenase (ycjQ) of Shigella flexneri.